We begin with the raw amino-acid sequence, 124 residues long: Small ribosomal subunit protein uS13 (124 aa).

Residues 98–124 (VRGQRTRCNARTRKGPRKTVGAKRKEK) form a disordered region.

The protein belongs to the universal ribosomal protein uS13 family. As to quaternary structure, part of the 30S ribosomal subunit. Forms a loose heterodimer with protein S19. Forms two bridges to the 50S subunit in the 70S ribosome.

Its function is as follows. Located at the top of the head of the 30S subunit, it contacts several helices of the 16S rRNA. In the 70S ribosome it contacts the 23S rRNA (bridge B1a) and protein L5 of the 50S subunit (bridge B1b), connecting the 2 subunits; these bridges are implicated in subunit movement. Contacts the tRNAs in the A and P-sites. The polypeptide is Small ribosomal subunit protein uS13 (Dictyoglomus turgidum (strain DSM 6724 / Z-1310)).